Reading from the N-terminus, the 253-residue chain is Ubiquinone/menaquinone biosynthesis C-methyltransferase UbiE (253 aa).

S-adenosyl-L-methionine-binding positions include Thr-76, Asp-97, and 125–126 (NA).

It belongs to the class I-like SAM-binding methyltransferase superfamily. MenG/UbiE family.

It catalyses the reaction a 2-demethylmenaquinol + S-adenosyl-L-methionine = a menaquinol + S-adenosyl-L-homocysteine + H(+). It carries out the reaction a 2-methoxy-6-(all-trans-polyprenyl)benzene-1,4-diol + S-adenosyl-L-methionine = a 5-methoxy-2-methyl-3-(all-trans-polyprenyl)benzene-1,4-diol + S-adenosyl-L-homocysteine + H(+). It participates in quinol/quinone metabolism; menaquinone biosynthesis; menaquinol from 1,4-dihydroxy-2-naphthoate: step 2/2. Its pathway is cofactor biosynthesis; ubiquinone biosynthesis. In terms of biological role, methyltransferase required for the conversion of demethylmenaquinol (DMKH2) to menaquinol (MKH2) and the conversion of 2-polyprenyl-6-methoxy-1,4-benzoquinol (DDMQH2) to 2-polyprenyl-3-methyl-6-methoxy-1,4-benzoquinol (DMQH2). The chain is Ubiquinone/menaquinone biosynthesis C-methyltransferase UbiE from Stenotrophomonas maltophilia (strain R551-3).